The sequence spans 999 residues: Collagen alpha-1(I) chain (999 aa).

Positions 1-999 are disordered; that stretch reads SYGYDEKSAG…PGPPGPPGPP (999 aa). Residue Lys7 is modified to Allysine. Ser8 is modified (phosphoserine). A 4-hydroxyproline mark is found at Pro27, Pro30, Pro33, Pro42, Pro45, Pro48, Pro62, Pro77, Pro83, Pro92, and Pro98. Basic and acidic residues predominate over residues 65 to 79; sequence NGDDGEAGKPGRPGE. Lys101 is subject to 5-hydroxylysine; alternate. Lys101 carries an O-linked (Gal...) hydroxylysine; alternate glycan. Residue Ser107 is modified to Phosphoserine. The segment covering 115–131 has biased composition (low complexity); the sequence is DAGPAGPKGEPGSPGEN. 16 positions are modified to 4-hydroxyproline: Pro125, Pro128, Pro134, Pro143, Pro149, Pro170, Pro179, Pro182, Pro209, Pro212, Pro224, Pro230, Pro239, Pro245, Pro248, and Pro263. The segment covering 149–167 has biased composition (low complexity); sequence PGASGPAGARGNDGATGAA. Residues 169-181 are compositionally biased toward pro residues; it reads PPGPTGPAGPPGF. The span at 215-254 shows a compositional bias: low complexity; it reads AGAAGPAGNPGADGQPGAKGANGAPGIAGAPGFPGARGPS. The residue at position 266 (Lys266) is a 5-hydroxylysine. Pro272, Pro275, Pro287, Pro296, Pro311, Pro317, Pro326, and Pro332 each carry 4-hydroxyproline. The segment covering 321–330 has biased composition (gly residues); the sequence is GERGGPGSRG. 5-hydroxylysine is present on Lys341. 4-hydroxyproline occurs at positions 350, 359, 365, 371, 380, 383, 392, 401, 407, 419, 429, 432, 450, 468, 474, 480, 486, 492, 498, 510, 526, 532, 538, and 547. Residues 374–400 are compositionally biased toward low complexity; it reads KGLTGSPGSPGPDGKTGPPGPAGQDGR. Over residues 462-489 the composition is skewed to low complexity; sequence QGPAGSPGFQGLPGPAGPPGEAGKPGEQ. A compositionally biased stretch (low complexity) spans 522–535; it reads APGAPGSQGAPGLQ. Lys559 bears the 5-hydroxylysine mark. Pro565, Pro580, and Pro586 each carry 4-hydroxyproline. Residues 592-606 are compositionally biased toward low complexity; the sequence is SGPSGPAGPTGARGA. A Phosphoserine modification is found at Ser595. Residues Pro607, Pro613, Pro616, Pro625, Pro631, Pro649, Pro658, and Pro667 each carry the 4-hydroxyproline modification. The span at 619–646 shows a compositional bias: low complexity; sequence AGFAGPPGADGQPGAKGEPGDAGAKGDA. The span at 648-660 shows a compositional bias: pro residues; sequence PPGPAGPTGPPGP. Lys670 bears the 5-hydroxylysine mark. The span at 675 to 691 shows a compositional bias: low complexity; sequence SAGPPGATGFPGAAGRV. Residues Pro679 and Pro685 each carry the 4-hydroxyproline modification. Pro693 carries the post-translational modification 3-hydroxyproline. 16 positions are modified to 4-hydroxyproline: Pro694, Pro703, Pro706, Pro727, Pro736, Pro745, Pro754, Pro772, Pro781, Pro784, Pro790, Pro805, Pro811, Pro817, Pro826, and Pro832. The span at 720–729 shows a compositional bias: low complexity; sequence ETGPAGRPGE. The segment covering 739 to 754 has biased composition (low complexity); it reads SGEKGSPGADGPAGAP. The segment covering 804–814 has biased composition (pro residues); that stretch reads PPGPVGPPGLA. A compositionally biased stretch (low complexity) spans 816–831; that stretch reads PPGESGREGSPGAEGS. Lys841 carries the 5-hydroxylysine modification. Residues 849-864 show a composition bias toward pro residues; sequence PGPPGAPGAPGAPGPV. Residues Pro852, Pro855, and Pro858 each carry the 4-hydroxyproline modification. A compositionally biased stretch (low complexity) spans 885 to 899; the sequence is AGPAGARGPAGPQGP. A compositionally biased stretch (basic and acidic residues) spans 900-914; the sequence is RGDKGETGEQGDRGI. Residue Lys903 is modified to 5-hydroxylysine. Position 915 is a 5-hydroxylysine; alternate (Lys915). Lys915 carries O-linked (Gal...) hydroxylysine; alternate glycosylation. Residues Pro930, Pro933, Pro951, and Pro966 each carry the 4-hydroxyproline modification. Residues 933–966 show a composition bias toward low complexity; that stretch reads PGEQGPSGASGPAGPRGPPGSAGSPGKDGLNGLP. A 3-hydroxyproline modification is found at Pro971. Pro972 is modified (4-hydroxyproline). Positions 984–999 are enriched in pro residues; it reads VGPPGPPGPPGPPGPP. Pro986 carries the post-translational modification 3-hydroxyproline. 4-hydroxyproline is present on Pro987. Pro989 is subject to 3-hydroxyproline. Position 990 is a 4-hydroxyproline (Pro990). Position 992 is a 3-hydroxyproline (Pro992). Residues Pro993, Pro996, and Pro999 each carry the 4-hydroxyproline modification.

Belongs to the fibrillar collagen family. In terms of assembly, trimers of one alpha 2(I) and two alpha 1(I) chains. In terms of processing, contains mostly 4-hydroxyproline. Proline residues at the third position of the tripeptide repeating unit (G-X-Y) are hydroxylated in some or all of the chains. Contains 3-hydroxyproline at a few sites. This modification occurs on the first proline residue in the sequence motif Gly-Pro-Hyp, where Hyp is 4-hydroxyproline. Post-translationally, lysine residues at the third position of the tripeptide repeating unit (G-X-Y) are 5-hydroxylated in some or all of the chains. In terms of processing, O-glycosylated on hydroxylated lysine residues. The O-linked glycan consists of a Glc-Gal disaccharide. As to expression, expressed in bones.

Its subcellular location is the secreted. The protein localises to the extracellular space. It is found in the extracellular matrix. Its function is as follows. Type I collagen is a member of group I collagen (fibrillar forming collagen). The protein is Collagen alpha-1(I) chain of Choloepus hoffmanni (Hoffmann's two-fingered sloth).